Reading from the N-terminus, the 221-residue chain is Chalcone--flavanone isomerase 2 (221 aa).

Substrate-binding residues include Thr-50, Asn-115, and Ser-192.

It belongs to the chalcone isomerase family.

The catalysed reaction is a chalcone = a flavanone.. The protein operates within secondary metabolite biosynthesis; flavonoid biosynthesis. Functionally, catalyzes the intramolecular cyclization of bicyclic chalcones into tricyclic (S)-flavanones. Responsible for the isomerization of 4,2',4',6'-tetrahydroxychalcone (also termed chalcone) into naringenin. This chain is Chalcone--flavanone isomerase 2 (CHI2), found in Lotus japonicus (Lotus corniculatus var. japonicus).